The chain runs to 210 residues: Ribosomal RNA small subunit methyltransferase G (210 aa).

S-adenosyl-L-methionine contacts are provided by residues Gly76, Met81, 127–128 (VE), and Arg145.

This sequence belongs to the methyltransferase superfamily. RNA methyltransferase RsmG family.

The protein resides in the cytoplasm. It carries out the reaction guanosine(527) in 16S rRNA + S-adenosyl-L-methionine = N(7)-methylguanosine(527) in 16S rRNA + S-adenosyl-L-homocysteine. Functionally, specifically methylates the N7 position of guanine in position 527 of 16S rRNA. This is Ribosomal RNA small subunit methyltransferase G from Acinetobacter baumannii (strain SDF).